The chain runs to 445 residues: Histidinol dehydrogenase (445 aa).

Positions 134, 198, and 226 each coordinate NAD(+). Residues Thr249, Gln271, and His274 each coordinate substrate. Positions 271 and 274 each coordinate Zn(2+). Active-site proton acceptor residues include Glu340 and His341. Substrate contacts are provided by His341, Asp374, Glu428, and His433. Asp374 is a Zn(2+) binding site. Residue His433 coordinates Zn(2+).

Belongs to the histidinol dehydrogenase family. Zn(2+) is required as a cofactor.

It carries out the reaction L-histidinol + 2 NAD(+) + H2O = L-histidine + 2 NADH + 3 H(+). It functions in the pathway amino-acid biosynthesis; L-histidine biosynthesis; L-histidine from 5-phospho-alpha-D-ribose 1-diphosphate: step 9/9. Functionally, catalyzes the sequential NAD-dependent oxidations of L-histidinol to L-histidinaldehyde and then to L-histidine. The protein is Histidinol dehydrogenase of Nocardia farcinica (strain IFM 10152).